A 541-amino-acid polypeptide reads, in one-letter code: Chaperonin GroEL 1 (541 aa).

ATP contacts are provided by residues 29 to 32, 86 to 90, G413, 478 to 480, and D494; these read TLGP, DGTTT, and NAA. Positions 520 to 541 are disordered; sequence VVEKPAEAEDDGHGHGHGHHHH. The segment covering 523 to 533 has biased composition (basic and acidic residues); sequence KPAEAEDDGHG.

The protein belongs to the chaperonin (HSP60) family. As to quaternary structure, forms a cylinder of 14 subunits composed of two heptameric rings stacked back-to-back. Interacts with the co-chaperonin GroES.

The protein resides in the cytoplasm. The enzyme catalyses ATP + H2O + a folded polypeptide = ADP + phosphate + an unfolded polypeptide.. Its function is as follows. Together with its co-chaperonin GroES, plays an essential role in assisting protein folding. The GroEL-GroES system forms a nano-cage that allows encapsulation of the non-native substrate proteins and provides a physical environment optimized to promote and accelerate protein folding. The chain is Chaperonin GroEL 1 from Mycolicibacterium gilvum (strain PYR-GCK) (Mycobacterium gilvum (strain PYR-GCK)).